We begin with the raw amino-acid sequence, 472 residues long: Poly(A) polymerase catalytic subunit (472 aa).

Catalysis depends on residues D194 and D196.

The protein belongs to the poxviridae poly(A) polymerase catalytic subunit family. In terms of assembly, heterodimer of a large (catalytic) subunit and a small (regulatory) subunit.

It catalyses the reaction RNA(n) + ATP = RNA(n)-3'-adenine ribonucleotide + diphosphate. Polymerase that creates the 3'-poly(A) tail of mRNA's. In Serinus (CNPV), this protein is Poly(A) polymerase catalytic subunit (PAPL).